Here is a 181-residue protein sequence, read N- to C-terminus: Probable pyruvoyl-dependent arginine decarboxylase (181 aa).

Pyruvic acid (Ser) is present on Ser-43.

This sequence belongs to the PdaD family. Pyruvate is required as a cofactor.

The catalysed reaction is L-arginine + H(+) = agmatine + CO2. This chain is Probable pyruvoyl-dependent arginine decarboxylase, found in Chlorobaculum parvum (strain DSM 263 / NCIMB 8327) (Chlorobium vibrioforme subsp. thiosulfatophilum).